A 644-amino-acid polypeptide reads, in one-letter code: 3D-(3,5/4)-trihydroxycyclohexane-1,2-dione hydrolase (644 aa).

Position 65 (Glu-65) interacts with thiamine diphosphate. Positions 442–522 (SLPGDLQRMW…INVLLFDNSG (81 aa)) are thiamine pyrophosphate binding. Residues Asp-493 and Asn-520 each contribute to the Mg(2+) site.

This sequence belongs to the TPP enzyme family. The cofactor is Mg(2+). Thiamine diphosphate serves as cofactor.

The catalysed reaction is 3D-3,5/4-trihydroxycyclohexane-1,2-dione + H2O = 5-deoxy-D-glucuronate + H(+). It participates in polyol metabolism; myo-inositol degradation into acetyl-CoA; acetyl-CoA from myo-inositol: step 3/7. In terms of biological role, involved in the cleavage of the C1-C2 bond of 3D-(3,5/4)-trihydroxycyclohexane-1,2-dione (THcHDO) to yield 5-deoxy-glucuronate (5DG). This is 3D-(3,5/4)-trihydroxycyclohexane-1,2-dione hydrolase from Bacillus cereus (strain AH820).